Here is a 217-residue protein sequence, read N- to C-terminus: Peptidyl-tRNA hydrolase (217 aa).

Tyr-14 provides a ligand contact to tRNA. His-19 (proton acceptor) is an active-site residue. Tyr-64, Asn-66, and Asn-113 together coordinate tRNA. The disordered stretch occupies residues 182 to 217; that stretch reads MNRINAPPPKPKREQKRSSDAPDSSSDTNTSNASDG. Residues 202-217 are compositionally biased toward low complexity; it reads APDSSSDTNTSNASDG.

It belongs to the PTH family. Monomer.

It is found in the cytoplasm. It catalyses the reaction an N-acyl-L-alpha-aminoacyl-tRNA + H2O = an N-acyl-L-amino acid + a tRNA + H(+). Its function is as follows. Hydrolyzes ribosome-free peptidyl-tRNAs (with 1 or more amino acids incorporated), which drop off the ribosome during protein synthesis, or as a result of ribosome stalling. In terms of biological role, catalyzes the release of premature peptidyl moieties from peptidyl-tRNA molecules trapped in stalled 50S ribosomal subunits, and thus maintains levels of free tRNAs and 50S ribosomes. In Roseiflexus sp. (strain RS-1), this protein is Peptidyl-tRNA hydrolase.